We begin with the raw amino-acid sequence, 312 residues long: Acetaldehyde dehydrogenase (312 aa).

11–14 (SGNI) is a binding site for NAD(+). Cysteine 129 acts as the Acyl-thioester intermediate in catalysis. Residues 160–168 (SAGPGTRAN) and asparagine 287 contribute to the NAD(+) site.

It belongs to the acetaldehyde dehydrogenase family.

It carries out the reaction acetaldehyde + NAD(+) + CoA = acetyl-CoA + NADH + H(+). In Sphingobium yanoikuyae (Sphingomonas yanoikuyae), this protein is Acetaldehyde dehydrogenase (xylQ).